The following is a 428-amino-acid chain: Major capsid protein (428 aa).

The stretch at 4 to 24 (IEELRRQRAGINEQIQALATI) forms a coiled coil.

This sequence belongs to the HK97 phage major capsid protein family. In terms of processing, the scaffolding domain delta is cleaved by the viral protease and lost after assembly.

The protein resides in the virion. Its function is as follows. Major capsid protein that assembles to form an icosahedral capsid. The polypeptide is Major capsid protein (Klebsiella oxytoca (Bacteriophage phiKO2)).